A 1705-amino-acid chain; its full sequence is Rho guanine nucleotide exchange factor 28 (1705 aa).

Disordered regions lie at residues 287 to 316 (RPEE…SAAE) and 473 to 524 (KKRS…ETNT). Serine 313 and serine 478 each carry phosphoserine. Residues 501-510 (PGSQSSSRTG) show a composition bias toward polar residues. Serine 624 carries the post-translational modification Phosphoserine. The tract at residues 630–649 (MTSPRNKSKTKSKDAKDKEK) is disordered. The segment covering 640-649 (KSKDAKDKEK) has biased composition (basic and acidic residues). Residues 652–699 (RHQFAPGTFSGVLQCLVCDKTLLGKESLQCSNCNANVHKGCKDAAPAC) form a Phorbol-ester/DAG-type zinc finger. 2 stretches are compositionally biased toward polar residues: residues 710-721 (NKPQTILGNSSF) and 759-775 (VPGT…TSLE). The interval 710 to 800 (NKPQTILGNS…ELLQSMGSSP (91 aa)) is disordered. A compositionally biased stretch (basic and acidic residues) spans 777–791 (ESDHNSCRSRSHSDE). Positions 849–1044 (KRQDVIFELM…KDMIATVDLK (196 aa)) constitute a DH domain. The 103-residue stretch at 1086 to 1188 (TLLYDGLVYW…WMRRIQQAVE (103 aa)) folds into the PH domain. The segment at 1187–1207 (VESCPEEKGGRTSESDEDKRK) is disordered. Basic and acidic residues predominate over residues 1191 to 1207 (PEEKGGRTSESDEDKRK). Residues 1295–1304 (AVSQSCEDSC) form an interaction with PTK2/FAK1; required for regulation of axonal branching and synapse formation region. A disordered region spans residues 1312 to 1339 (TLSSHDVPGSPTASLVTGGREGRGCSDV). A mediates cytoplasmic retention and interaction with YWHAH region spans residues 1372–1383 (IIQAIQNLTRLL). Residues 1425 to 1705 (QKSRDADRQH…DGAKENIVYL (281 aa)) form an interaction with microtubules region. Positions 1488–1525 (RSRGELDLQLQEYQHSLERLREGQRLVEREQARMRAQQ) form a coiled coil. The RNA-binding stretch occupies residues 1496-1527 (QLQEYQHSLERLREGQRLVEREQARMRAQQSL). At serine 1538 the chain carries Phosphoserine. The tract at residues 1566–1579 (FINEALVQMSFNTF) is mediates cytoplasmic retention and interaction with MAPK8IP1. The interval 1638–1705 (PFHESSKDSC…DGAKENIVYL (68 aa)) is disordered. Positions 1641–1655 (ESSKDSCKNDLDTSH) are enriched in basic and acidic residues. Polar residues predominate over residues 1656-1669 (TESPTPHDSNSHRP). Over residues 1688–1699 (TRQDGETGDGAK) the composition is skewed to basic and acidic residues.

As to quaternary structure, homooligomer; forms cytoplasmic aggregates. Forms a complex with MAPK8 and MAPK8IP1. Interacts with RHOA. Interacts with microtubules. Interacts with YWHAE and YWHAH. Interacts with PTK2/FAK1. Interacts with NEFL. Interacts with CTNND2; prevents interaction with RHOA. In terms of processing, phosphorylated on tyrosine upon stimulation of cells by laminin.

Its subcellular location is the cytoplasm. It localises to the cell membrane. Functionally, functions as a RHOA-specific guanine nucleotide exchange factor regulating signaling pathways downstream of integrins and growth factor receptors. Functions in axonal branching, synapse formation and dendritic morphogenesis. Also functions in focal adhesion formation, cell motility and B-lymphocytes activation. May regulate NEFL expression and aggregation and play a role in apoptosis. The protein is Rho guanine nucleotide exchange factor 28 (ARHGEF28) of Homo sapiens (Human).